The following is a 294-amino-acid chain: MLGDLFTKPKKRKYATIPSDGTKADVPEGIMTKCPECKKIMYTKELQKNLMVCNYCGFHHPIGAKARIDMLVDEGSFEEIDASLTTANPLGFEDYMDRIEKDKQKSGLNEAIVTGHATIDGNPLVIAVMDSRFRMASMGSVVGEKIFRAVEDADKTNKPFVIFTASGGARMQEGMLSLMQMAKTSAAFKRFSNHGGLIITVMTHPTTGGVSASFASLGDYNFAEPGALIGFAGRRVIEQTVREELPEDFQTSEFLLKHGQLDDCISRLDLQNKLSFILSIHVKTPEVGGEADGE.

Residues Ile-30 to Glu-294 enclose the CoA carboxyltransferase N-terminal domain. 4 residues coordinate Zn(2+): Cys-34, Cys-37, Cys-53, and Cys-56. A C4-type zinc finger spans residues Cys-34–Cys-56.

Belongs to the AccD/PCCB family. Acetyl-CoA carboxylase is a heterohexamer composed of biotin carboxyl carrier protein (AccB), biotin carboxylase (AccC) and two subunits each of ACCase subunit alpha (AccA) and ACCase subunit beta (AccD). The cofactor is Zn(2+).

The protein localises to the cytoplasm. The enzyme catalyses N(6)-carboxybiotinyl-L-lysyl-[protein] + acetyl-CoA = N(6)-biotinyl-L-lysyl-[protein] + malonyl-CoA. It participates in lipid metabolism; malonyl-CoA biosynthesis; malonyl-CoA from acetyl-CoA: step 1/1. In terms of biological role, component of the acetyl coenzyme A carboxylase (ACC) complex. Biotin carboxylase (BC) catalyzes the carboxylation of biotin on its carrier protein (BCCP) and then the CO(2) group is transferred by the transcarboxylase to acetyl-CoA to form malonyl-CoA. The chain is Acetyl-coenzyme A carboxylase carboxyl transferase subunit beta from Listeria monocytogenes serotype 4b (strain F2365).